A 1111-amino-acid polypeptide reads, in one-letter code: Serine/threonine-protein kinase Nek10 (1111 aa).

Positions 1–16 are enriched in basic and acidic residues; sequence MPDQDTKAKSTEKTAD. Disordered stretches follow at residues 1 to 24 and 47 to 72; these read MPDQ…TTTR and AINF…HRAR. Over residues 47-63 the composition is skewed to polar residues; that stretch reads AINFDSAQNNMTKSEPT. The stretch at 481 to 514 forms a coiled coil; that stretch reads YKDLVSQLNLLLEDELKQIAENIESINQKKAPLK. A Protein kinase domain is found at 519–791; it reads YAVLDHLGSG…MISDVMMKYL (273 aa). ATP-binding positions include 525 to 533 and K548; that span reads LGSGAFGCV. The active-site Proton acceptor is the D655.

This sequence belongs to the protein kinase superfamily. NEK Ser/Thr protein kinase family. NIMA subfamily. In terms of assembly, interacts with RAF1 and MAP2K1; the interaction is direct with RAF1 and required for ERK1/2-signaling pathway activation in response to UV irradiation. The cofactor is Mg(2+). In terms of tissue distribution, expressed in the mammary gland, lung, spleen, and kidney.

It carries out the reaction L-seryl-[protein] + ATP = O-phospho-L-seryl-[protein] + ADP + H(+). The enzyme catalyses L-threonyl-[protein] + ATP = O-phospho-L-threonyl-[protein] + ADP + H(+). Plays a role in the cellular response to UV irradiation. Mediates G2/M cell cycle arrest, MEK autoactivation and ERK1/2-signaling pathway activation in response to UV irradiation. In ciliated cells, it is involved in the regulation of mucociliary transport. This Mus musculus (Mouse) protein is Serine/threonine-protein kinase Nek10.